The chain runs to 397 residues: UPF0761 membrane protein Kkor_1635 (397 aa).

The next 6 membrane-spanning stretches (helical) occupy residues 36–56 (MLAL…FPSF), 92–112 (NLSA…MRSI), 132–152 (ILAY…SLAA), 168–188 (ILTF…LYMV), 201–221 (IAAV…AIFV), and 237–257 (IPIF…GVIV).

Belongs to the UPF0761 family.

It is found in the cell inner membrane. The protein is UPF0761 membrane protein Kkor_1635 of Kangiella koreensis (strain DSM 16069 / JCM 12317 / KCTC 12182 / SW-125).